The primary structure comprises 888 residues: C2H2 zinc finger transcription factor sltA (888 aa).

Disordered stretches follow at residues 1 to 78 (MSTS…QRSP), 132 to 176 (IDSQ…SSEN), and 388 to 407 (RSSM…ASAP). 3 stretches are compositionally biased toward polar residues: residues 23 to 32 (PSLSASTSIE), 167 to 176 (GLGTSLSSEN), and 388 to 397 (RSSMPSNREP). 2 consecutive C2H2-type zinc fingers follow at residues 500–522 (QKCK…EKTH) and 561–586 (YKCK…EKAH). The disordered stretch occupies residues 589–663 (DYVRSKHNGR…PTQTGSGDFP (75 aa)). Over residues 602 to 632 (KASNGATPQTPSIATPSSKAQGITTPLTGSE) the composition is skewed to polar residues.

It localises to the nucleus. Transcription factor that contributes to azole resistance by coregulating the expression of the drug target erg11A and the drug efflux pump mdr1. Binds to the 5'-AGGCA-3' motif in the promoters of ergosterol biosynthesis and drug pump genes to regulate their expression. Is able to interact with the promoters of sltA, sltB, erg11A, erg13A, erg24A, mdr1, abcE and mfsC. Involved in antifungal drug resistance to azoles, terbinafine, and simvastatin but not amphotericin B or caspofungin. The sequence is that of C2H2 zinc finger transcription factor sltA from Aspergillus fumigatus (strain CBS 144.89 / FGSC A1163 / CEA10) (Neosartorya fumigata).